The chain runs to 193 residues: Dirigent protein (193 aa).

The signal sequence occupies residues methionine 1 to proline 29. A disulfide bridge links cysteine 40 with cysteine 192. N-linked (GlcNAc...) asparagine glycosylation is found at asparagine 59 and asparagine 129.

This sequence belongs to the plant dirigent protein family. As to quaternary structure, homodimer. In terms of tissue distribution, expressed in rhizomes, stems, and leaves.

It localises to the secreted. The protein resides in the extracellular space. The protein localises to the apoplast. The protein operates within aromatic compound metabolism; phenylpropanoid biosynthesis. Functionally, dirigent proteins impart stereoselectivity on the phenoxy radical-coupling reaction, yielding optically active lignans from two molecules of coniferyl alcohol in the biosynthesis of lignans, flavonolignans, and alkaloids and thus plays a central role in plant secondary metabolism. Also involved in the biosynthesis of etoposide, a chemotherapeutic compound of the topoisomerase inhibitor family. The polypeptide is Dirigent protein (Sinopodophyllum hexandrum (Himalayan may apple)).